The following is a 270-amino-acid chain: Allergen Asp f 7 (270 aa).

The signal sequence occupies residues Met-1–Ala-21. Disordered stretches follow at residues Tyr-53–Gln-97 and Ala-113–Ser-167. The span at Val-63 to Pro-81 shows a compositional bias: low complexity. The span at Glu-83–Gln-97 shows a compositional bias: polar residues. Residues Pro-127–Ala-149 are compositionally biased toward low complexity. A compositionally biased stretch (polar residues) spans Asn-150–Tyr-162.

In Aspergillus fumigatus (strain ATCC MYA-4609 / CBS 101355 / FGSC A1100 / Af293) (Neosartorya fumigata), this protein is Allergen Asp f 7.